The following is a 361-amino-acid chain: 5-formaminoimidazole-4-carboxamide-1-(beta)-D-ribofuranosyl 5'-monophosphate synthetase (361 aa).

Histidine 27 and serine 94 together coordinate 5-amino-1-(5-phospho-beta-D-ribosyl)imidazole-4-carboxamide. The ATP-grasp domain maps to arginine 116–lysine 348. ATP-binding positions include proline 146–cysteine 208 and glutamate 230. Asparagine 258 is a binding site for 5-amino-1-(5-phospho-beta-D-ribosyl)imidazole-4-carboxamide. Glutamine 297 and glutamate 310 together coordinate Mg(2+).

Belongs to the phosphohexose mutase family. Requires Mg(2+) as cofactor. Mn(2+) serves as cofactor.

The enzyme catalyses 5-amino-1-(5-phospho-beta-D-ribosyl)imidazole-4-carboxamide + formate + ATP = 5-formamido-1-(5-phospho-D-ribosyl)imidazole-4-carboxamide + ADP + phosphate. The protein operates within purine metabolism; IMP biosynthesis via de novo pathway; 5-formamido-1-(5-phospho-D-ribosyl)imidazole-4-carboxamide from 5-amino-1-(5-phospho-D-ribosyl)imidazole-4-carboxamide (formate route): step 1/1. Its function is as follows. Catalyzes the ATP- and formate-dependent formylation of 5-aminoimidazole-4-carboxamide-1-beta-d-ribofuranosyl 5'-monophosphate (AICAR) to 5-formaminoimidazole-4-carboxamide-1-beta-d-ribofuranosyl 5'-monophosphate (FAICAR) in the absence of folates. In Methanococcus vannielii (strain ATCC 35089 / DSM 1224 / JCM 13029 / OCM 148 / SB), this protein is 5-formaminoimidazole-4-carboxamide-1-(beta)-D-ribofuranosyl 5'-monophosphate synthetase.